Reading from the N-terminus, the 560-residue chain is Nibrin homolog (560 aa).

Residues 25–87 (YKVGRKDCDV…YGTFFNKVQG (63 aa)) enclose the FHA domain. Residues 115–190 (TFRLSFVPIV…KQIVLGDWFK (76 aa)) enclose the BRCT domain.

Belongs to the Nibrin family. In terms of assembly, component of the MRN complex composed of two heterodimers RAD50 and MRE11 associated with a single NBS1. Mostly expressed in the shoot apex and young flower, but also in young leaves, root tips and stamen, tissues where frequent cell division or meiosis may occur.

The protein resides in the nucleus. It localises to the chromosome. Its function is as follows. Component of the MRN complex, which plays a central role in double-strand break (DSB) repair, DNA recombination, maintenance of telomere integrity and meiosis. The MRN complex is involved in the repair of DNA double-strand breaks (DSBs) via homologous recombination (HR), an error-free mechanism which primarily occurs during S and G2 phases. The complex (1) mediates the end resection of damaged DNA, which generates proper single-stranded DNA, a key initial steps in HR, and is (2) required for the recruitment of other repair factors and efficient activation of ATM and ATR upon DNA damage. The MRN complex possesses single-strand endonuclease activity and double-strand-specific 3'-5' exonuclease activity, which are provided by MRE11, to initiate end resection, which is required for single-strand invasion and recombination. Within the MRN complex, NBS1 acts as a protein-protein adapter, which specifically recognizes and binds phosphorylated proteins, promoting their recruitment to DNA damage sites. Recruits MRE11 and RAD50 components of the MRN complex to DSBs in response to DNA damage. In Oryza sativa subsp. japonica (Rice), this protein is Nibrin homolog.